The chain runs to 571 residues: Glutamate--tRNA ligase (571 aa).

Positions 110-120 (PNPNGPGTLGS) match the 'HIGH' region motif.

It belongs to the class-I aminoacyl-tRNA synthetase family. Glutamate--tRNA ligase type 2 subfamily.

It is found in the cytoplasm. The enzyme catalyses tRNA(Glu) + L-glutamate + ATP = L-glutamyl-tRNA(Glu) + AMP + diphosphate. Its function is as follows. Catalyzes the attachment of glutamate to tRNA(Glu) in a two-step reaction: glutamate is first activated by ATP to form Glu-AMP and then transferred to the acceptor end of tRNA(Glu). This Methanosarcina acetivorans (strain ATCC 35395 / DSM 2834 / JCM 12185 / C2A) protein is Glutamate--tRNA ligase.